Consider the following 424-residue polypeptide: Histidine--tRNA ligase (424 aa).

It belongs to the class-II aminoacyl-tRNA synthetase family. In terms of assembly, homodimer.

The protein resides in the cytoplasm. The catalysed reaction is tRNA(His) + L-histidine + ATP = L-histidyl-tRNA(His) + AMP + diphosphate + H(+). The polypeptide is Histidine--tRNA ligase (Shigella flexneri).